Reading from the N-terminus, the 301-residue chain is 3-methyl-2-oxobutanoate hydroxymethyltransferase (301 aa).

Over residues 1–28 (MATSNSSDSSMSAEVPAPYGNGPANAPA) the composition is skewed to low complexity. The interval 1–37 (MATSNSSDSSMSAEVPAPYGNGPANAPATPSDTAKKP) is disordered. Residues Asp-82 and Asp-121 each coordinate Mg(2+). Residues 82–83 (DS), Asp-121, and Lys-151 each bind 3-methyl-2-oxobutanoate. Glu-153 is a binding site for Mg(2+). The Proton acceptor role is filled by Glu-219.

This sequence belongs to the PanB family. In terms of assembly, homodecamer; pentamer of dimers. It depends on Mg(2+) as a cofactor.

It is found in the cytoplasm. The catalysed reaction is 3-methyl-2-oxobutanoate + (6R)-5,10-methylene-5,6,7,8-tetrahydrofolate + H2O = 2-dehydropantoate + (6S)-5,6,7,8-tetrahydrofolate. Its pathway is cofactor biosynthesis; (R)-pantothenate biosynthesis; (R)-pantoate from 3-methyl-2-oxobutanoate: step 1/2. Its function is as follows. Catalyzes the reversible reaction in which hydroxymethyl group from 5,10-methylenetetrahydrofolate is transferred onto alpha-ketoisovalerate to form ketopantoate. This Arthrobacter sp. (strain FB24) protein is 3-methyl-2-oxobutanoate hydroxymethyltransferase.